A 390-amino-acid chain; its full sequence is 1-deoxy-D-xylulose 5-phosphate reductoisomerase (390 aa).

T10, G11, S12, V13, and N124 together coordinate NADPH. K125 contributes to the 1-deoxy-D-xylulose 5-phosphate binding site. E126 is a binding site for NADPH. D150 contributes to the Mn(2+) binding site. Positions 151, 152, 181, and 204 each coordinate 1-deoxy-D-xylulose 5-phosphate. E152 contacts Mn(2+). Position 210 (G210) interacts with NADPH. 4 residues coordinate 1-deoxy-D-xylulose 5-phosphate: S217, N222, K223, and E226. E226 is a binding site for Mn(2+).

This sequence belongs to the DXR family. The cofactor is Mg(2+). Mn(2+) serves as cofactor.

The enzyme catalyses 2-C-methyl-D-erythritol 4-phosphate + NADP(+) = 1-deoxy-D-xylulose 5-phosphate + NADPH + H(+). Its pathway is isoprenoid biosynthesis; isopentenyl diphosphate biosynthesis via DXP pathway; isopentenyl diphosphate from 1-deoxy-D-xylulose 5-phosphate: step 1/6. Catalyzes the NADPH-dependent rearrangement and reduction of 1-deoxy-D-xylulose-5-phosphate (DXP) to 2-C-methyl-D-erythritol 4-phosphate (MEP). The polypeptide is 1-deoxy-D-xylulose 5-phosphate reductoisomerase (Janthinobacterium sp. (strain Marseille) (Minibacterium massiliensis)).